A 226-amino-acid polypeptide reads, in one-letter code: V-type proton ATPase subunit E 2 (226 aa).

It belongs to the V-ATPase E subunit family. In terms of assembly, V-ATPase is a heteromultimeric enzyme made up of two complexes: the ATP-hydrolytic V1 complex and the proton translocation V0 complex. The V1 complex consists of three catalytic AB heterodimers that form a heterohexamer, three peripheral stalks each consisting of EG heterodimers, one central rotor including subunits D and F, and the regulatory subunits C and H. The proton translocation complex V0 consists of the proton transport subunit a, a ring of proteolipid subunits c9c'', rotary subunit d, subunits e and f, and the accessory subunits ATP6AP1/Ac45 and ATP6AP2/PRR. In terms of tissue distribution, testis specific.

Subunit of the V1 complex of vacuolar(H+)-ATPase (V-ATPase), a multisubunit enzyme composed of a peripheral complex (V1) that hydrolyzes ATP and a membrane integral complex (V0) that translocates protons. V-ATPase is responsible for acidifying and maintaining the pH of intracellular compartments and in some cell types, is targeted to the plasma membrane, where it is responsible for acidifying the extracellular environment. This is V-type proton ATPase subunit E 2 (Atp6v1e2) from Mus musculus (Mouse).